Here is a 252-residue protein sequence, read N- to C-terminus: Hydroxyacylglutathione hydrolase (252 aa).

The Zn(2+) site is built by H54, H56, D58, H59, H111, D128, and H166.

It belongs to the metallo-beta-lactamase superfamily. Glyoxalase II family. Monomer. Zn(2+) serves as cofactor.

The catalysed reaction is an S-(2-hydroxyacyl)glutathione + H2O = a 2-hydroxy carboxylate + glutathione + H(+). Its pathway is secondary metabolite metabolism; methylglyoxal degradation; (R)-lactate from methylglyoxal: step 2/2. Functionally, thiolesterase that catalyzes the hydrolysis of S-D-lactoyl-glutathione to form glutathione and D-lactic acid. The sequence is that of Hydroxyacylglutathione hydrolase from Vibrio campbellii (strain ATCC BAA-1116).